The following is a 265-amino-acid chain: Pyridoxine 5'-phosphate synthase (265 aa).

N6 serves as a coordination point for 3-amino-2-oxopropyl phosphate. 8-9 contacts 1-deoxy-D-xylulose 5-phosphate; that stretch reads DH. Residue R17 coordinates 3-amino-2-oxopropyl phosphate. The active-site Proton acceptor is H42. The 1-deoxy-D-xylulose 5-phosphate site is built by R44 and H49. The Proton acceptor role is filled by E69. A 1-deoxy-D-xylulose 5-phosphate-binding site is contributed by T99. H213 (proton donor) is an active-site residue. 3-amino-2-oxopropyl phosphate is bound by residues G214 and 235–236; that span reads GQ.

Belongs to the PNP synthase family. Homooctamer; tetramer of dimers.

The protein localises to the cytoplasm. It catalyses the reaction 3-amino-2-oxopropyl phosphate + 1-deoxy-D-xylulose 5-phosphate = pyridoxine 5'-phosphate + phosphate + 2 H2O + H(+). The protein operates within cofactor biosynthesis; pyridoxine 5'-phosphate biosynthesis; pyridoxine 5'-phosphate from D-erythrose 4-phosphate: step 5/5. Catalyzes the complicated ring closure reaction between the two acyclic compounds 1-deoxy-D-xylulose-5-phosphate (DXP) and 3-amino-2-oxopropyl phosphate (1-amino-acetone-3-phosphate or AAP) to form pyridoxine 5'-phosphate (PNP) and inorganic phosphate. This chain is Pyridoxine 5'-phosphate synthase, found in Nitratiruptor sp. (strain SB155-2).